The sequence spans 221 residues: Phosphate-specific transport system accessory protein PhoU homolog 1 (221 aa).

This sequence belongs to the PhoU family. In terms of assembly, homodimer.

It is found in the cytoplasm. Functionally, plays a role in the regulation of phosphate uptake. In this role, it may bind, possibly as a chaperone, to PhoR, PhoP or a PhoR-PhoP complex to promote dephosphorylation of phospho-PhoP, or inhibit formation of the PhoR-PhoP transitory complex. The polypeptide is Phosphate-specific transport system accessory protein PhoU homolog 1 (phoU1) (Mycobacterium bovis (strain ATCC BAA-935 / AF2122/97)).